A 344-amino-acid polypeptide reads, in one-letter code: Protein YIPF3 (344 aa).

Residues 1–12 (MSASQGSKNTNA) show a composition bias toward polar residues. The disordered stretch occupies residues 1–24 (MSASQGSKNTNAEPWGGFDDNIIQ). The Cytoplasmic segment spans residues 1 to 146 (MSASQGSKNT…PVRMINFPQK (146 aa)). Residues 147–167 (VAGELYGPMMLVFTLVAILLH) traverse the membrane as a helical segment. The Lumenal segment spans residues 168–185 (GMKTSGTVIREGTLMGTA). The helical transmembrane segment at 186 to 206 (IGTGFGYWLGVSSFIYFLAYL) threads the bilayer. At 207–212 (CNAQIT) the chain is on the cytoplasmic side. A helical membrane pass occupies residues 213–233 (MLQMLSLLGYGLFGHCVVLFI). Residues 234 to 242 (TYNVHFHSL) lie on the Lumenal side of the membrane. A helical membrane pass occupies residues 243–263 (FYLLWMVIGGLSTLRMVAVLI). Residues 264–272 (SRTVGQTPR) lie on the Cytoplasmic side of the membrane. Residues 273 to 293 (LILCGSLAALHMLFLLYLHFA) form a helical membrane-spanning segment. The Lumenal portion of the chain corresponds to 294-344 (YHKMVEGILDTLEGPNIPPIQRVARDVPVVASAVVNATVKSIAAIVQSQQL). Residue Asn-329 is glycosylated (N-linked (GlcNAc...) asparagine).

This sequence belongs to the YIP1 family.

The protein resides in the cell membrane. The protein localises to the golgi apparatus. It localises to the cis-Golgi network membrane. It is found in the cytoplasm. Its function is as follows. Involved in the maintenance of the Golgi structure. May play a role in hematopoiesis. The polypeptide is Protein YIPF3 (yipf3) (Danio rerio (Zebrafish)).